A 171-amino-acid chain; its full sequence is Calcium-binding allergen Ole e 8 (171 aa).

EF-hand domains are found at residues 16–51 (QEPNEVQGVFNRFDANGDGKISGDELAGVLKALGSN), 52–87 (TSKEEIGRIMEEIDTDKDGFINVQEFAAFVKAETDP), 92–127 (GGENELKEAFELYDQDHNGLISSVELHKILTRLGER), and 128–163 (YAEHDCVEMIKSVDSDGDGYVSFEEFKKMMTNKSGN). 18 residues coordinate Ca(2+): Asp29, Asn31, Asp33, Lys35, Glu40, Asp65, Asp67, Asp69, Glu76, Asp105, Asp107, Asn109, Glu116, Asp141, Asp143, Asp145, Tyr147, and Glu152.

As to quaternary structure, homodimer. Expressed in pollen.

This chain is Calcium-binding allergen Ole e 8, found in Olea europaea (Common olive).